Here is an 858-residue protein sequence, read N- to C-terminus: DNA mismatch repair protein MutS (858 aa).

600-607 (GPNMSGKS) is an ATP binding site. The interval 803-823 (EAASDEVDDNNSENSPMTDAE) is disordered.

Belongs to the DNA mismatch repair MutS family.

Functionally, this protein is involved in the repair of mismatches in DNA. It is possible that it carries out the mismatch recognition step. This protein has a weak ATPase activity. The chain is DNA mismatch repair protein MutS from Lactobacillus helveticus (strain DPC 4571).